The primary structure comprises 241 residues: Probable histone-lysine N-methyltransferase set-23 (241 aa).

Positions 25 to 85 constitute a Pre-SET domain; sequence QGCDCETQCS…SCRNKVVQNG (61 aa). Residues C27, C29, C33, C39, C41, C64, C68, C70, and C77 each contribute to the Zn(2+) site. The 123-residue stretch at 88 to 210 folds into the SET domain; sequence KKLKIFSTSE…VGEELSYDYG (123 aa). S-adenosyl-L-methionine contacts are provided by residues 98–100, D138, Y140, R167, and 170–171; these read KGD and NH. C173, C222, C224, and C229 together coordinate Zn(2+). Residues 218–234 form the Post-SET domain; the sequence is NRKLCLCRSENCRKYLP.

It belongs to the class V-like SAM-binding methyltransferase superfamily. Histone-lysine methyltransferase family. Suvar3-9 subfamily.

It localises to the nucleus. The protein resides in the chromosome. It catalyses the reaction L-lysyl-[histone] + S-adenosyl-L-methionine = N(6)-methyl-L-lysyl-[histone] + S-adenosyl-L-homocysteine + H(+). In terms of biological role, probable histone methyltransferase required for embryonic development. This chain is Probable histone-lysine N-methyltransferase set-23, found in Caenorhabditis briggsae.